A 120-amino-acid chain; its full sequence is uncharacterized protein (120 aa).

The protein to M.jannaschii MJ0361.

This is an uncharacterized protein from Methanocaldococcus jannaschii (strain ATCC 43067 / DSM 2661 / JAL-1 / JCM 10045 / NBRC 100440) (Methanococcus jannaschii).